A 421-amino-acid polypeptide reads, in one-letter code: Tyrosine--tRNA ligase 1 (421 aa).

Y35 is a binding site for L-tyrosine. Residues P40 to H49 carry the 'HIGH' region motif. The L-tyrosine site is built by Y170 and Q174. A 'KMSKS' region motif is present at residues K231–T235. ATP is bound at residue K234. The region spanning L354 to Y420 is the S4 RNA-binding domain.

This sequence belongs to the class-I aminoacyl-tRNA synthetase family. TyrS type 1 subfamily. As to quaternary structure, homodimer.

It is found in the cytoplasm. The enzyme catalyses tRNA(Tyr) + L-tyrosine + ATP = L-tyrosyl-tRNA(Tyr) + AMP + diphosphate + H(+). Its function is as follows. Catalyzes the attachment of tyrosine to tRNA(Tyr) in a two-step reaction: tyrosine is first activated by ATP to form Tyr-AMP and then transferred to the acceptor end of tRNA(Tyr). The chain is Tyrosine--tRNA ligase 1 from Bacillus licheniformis (strain ATCC 14580 / DSM 13 / JCM 2505 / CCUG 7422 / NBRC 12200 / NCIMB 9375 / NCTC 10341 / NRRL NRS-1264 / Gibson 46).